Consider the following 487-residue polypeptide: Probable cytochrome P450 516A1 (487 aa).

The chain crosses the membrane as a helical span at residues 1–21; sequence MIILLLSIIIFILYIVKIFKN. Cysteine 434 contacts heme.

The protein belongs to the cytochrome P450 family. Heme serves as cofactor.

Its subcellular location is the membrane. This is Probable cytochrome P450 516A1 (cyp516A1) from Dictyostelium discoideum (Social amoeba).